We begin with the raw amino-acid sequence, 425 residues long: tRNA(Ile)-lysidine synthase (425 aa).

Ser27–Ser32 contacts ATP.

The protein belongs to the tRNA(Ile)-lysidine synthase family.

It localises to the cytoplasm. The enzyme catalyses cytidine(34) in tRNA(Ile2) + L-lysine + ATP = lysidine(34) in tRNA(Ile2) + AMP + diphosphate + H(+). Its function is as follows. Ligates lysine onto the cytidine present at position 34 of the AUA codon-specific tRNA(Ile) that contains the anticodon CAU, in an ATP-dependent manner. Cytidine is converted to lysidine, thus changing the amino acid specificity of the tRNA from methionine to isoleucine. The polypeptide is tRNA(Ile)-lysidine synthase (Streptococcus pneumoniae (strain 70585)).